The chain runs to 599 residues: Elongation factor 4 (599 aa).

The tr-type G domain occupies 2 to 184; it reads KNIRNFSIIA…RLVRDIPPPE (183 aa). Residues 14-19 and 131-134 contribute to the GTP site; these read DHGKST and NKID.

The protein belongs to the TRAFAC class translation factor GTPase superfamily. Classic translation factor GTPase family. LepA subfamily.

It is found in the cell inner membrane. The enzyme catalyses GTP + H2O = GDP + phosphate + H(+). In terms of biological role, required for accurate and efficient protein synthesis under certain stress conditions. May act as a fidelity factor of the translation reaction, by catalyzing a one-codon backward translocation of tRNAs on improperly translocated ribosomes. Back-translocation proceeds from a post-translocation (POST) complex to a pre-translocation (PRE) complex, thus giving elongation factor G a second chance to translocate the tRNAs correctly. Binds to ribosomes in a GTP-dependent manner. This chain is Elongation factor 4, found in Sodalis glossinidius (strain morsitans).